Consider the following 139-residue polypeptide: MKLIILLCLVASSYALIGNTQSAGVRGKLICNGKPAVGVLVKLYDDDRGIDADDLMASGKTNGNGDFEISGHEDEVTPIDPKLNIYHDCNDGIKPCQRKFTIKIPDSYINKGKTVRNIYDAGVIQLAGSFPGEGRDCLH.

The first 15 residues, 1 to 15, serve as a signal peptide directing secretion; sequence MKLIILLCLVASSYA.

This sequence belongs to the nematode transthyretin-like family.

The protein localises to the secreted. This chain is Transthyretin-like protein 5 (ttr-5), found in Caenorhabditis elegans.